The following is a 232-amino-acid chain: Dof zinc finger protein DOF4.3 (232 aa).

Residues 25–79 form a Dof-type zinc finger; that stretch reads RVCARCDSDNTKFCYYNNYSEFQPRYFCKNCRRYWTHGGALRNVPIGGSSRAKRT. Zn(2+) contacts are provided by Cys27, Cys30, Cys52, and Cys55.

Its subcellular location is the nucleus. In terms of biological role, transcription factor that binds specifically to a 5'-AA[AG]G-3' consensus core sequence. The sequence is that of Dof zinc finger protein DOF4.3 (DOF4.3) from Arabidopsis thaliana (Mouse-ear cress).